A 421-amino-acid polypeptide reads, in one-letter code: MLSIGSLCLSLGTTPKPLKPSKTPKPIRKLYATKAMAGSNPKQVSTFEFRDLMETFAVDVKRAENRPLNVPLIAPFTIASSRLDKVENVAIRIELSDGCVGWGEAPILPFVTAEDQSTAMIKAREACELLKNSSSMKLGLVLERVSEILPGHEFASVRAGVEMALIDAVAKSINVPLWILFGGASDSITTDITIPIVSSAEAAELASKYRKQGFQTLKLKVGKNLKEDIEVLQAIRAVHPDCLFILDANEGYKPEEAIEVLEELHKMGVTPILFEQPVHRDDWEGLGHVTHIAKGKYGVSVAADESCRSLVDAKRIIKGNLADVINIKLAKVGVVGGLEIIEEARTSGLDLMIGGMVETRLAMGFAGHLAAGFGCFKFIDLDTPLLLSEDPVLEGYEVSGAVYKFTDAQGHAGFLDWDNVL.

Substrate-binding positions include Thr193 and 218 to 220; that span reads KLK. Asp247, Glu275, and Asp304 together coordinate Mg(2+). Substrate-binding positions include Lys328 and 380–382; that span reads DLD.

Belongs to the mandelate racemase/muconate lactonizing enzyme family. The cofactor is Mg(2+).

In terms of biological role, catalyzes the epimerization of various hydrophobic and polar dipeptides. Has epimerase activity with L-Ala-L-Ala, L-Ala-L-Ser, L-Ala-L-Thr and L-Ala-L-Trp (in vitro). The sequence is that of L-Ala-D/L-amino acid epimerase from Populus trichocarpa (Western balsam poplar).